The chain runs to 85 residues: Probable oxaloacetate decarboxylase gamma chain (85 aa).

Residues 11 to 33 (AATLMVTGMAVVFIFLTILVYLV) traverse the membrane as a helical segment.

It belongs to the OadG family. As to quaternary structure, heterotrimer of an alpha, a beta and a gamma subunit. It depends on Na(+) as a cofactor.

The protein resides in the cell membrane. It carries out the reaction oxaloacetate + 2 Na(+)(in) + H(+) = pyruvate + 2 Na(+)(out) + CO2. In terms of biological role, catalyzes the decarboxylation of oxaloacetate coupled to Na(+) translocation. This Vibrio parahaemolyticus serotype O3:K6 (strain RIMD 2210633) protein is Probable oxaloacetate decarboxylase gamma chain.